We begin with the raw amino-acid sequence, 322 residues long: Thioredoxin reductase (322 aa).

FAD is bound by residues 12 to 15 (SGPA), 34 to 42 (EGAVTAGGA), asparagine 51, and valine 84. A disulfide bond links cysteine 136 and cysteine 139. The NADP(+) site is built by histidine 176, arginine 182, and tyrosine 259. FAD is bound by residues aspartate 279 and 286-289 (RQAI). Residue arginine 286 participates in NADP(+) binding.

The protein belongs to the class-II pyridine nucleotide-disulfide oxidoreductase family. In terms of assembly, homodimer. Requires FAD as cofactor.

It carries out the reaction [thioredoxin]-dithiol + NADP(+) = [thioredoxin]-disulfide + NADPH + H(+). In terms of biological role, component of the thioredoxin-thioredoxin reductase system which may be involved in biosynthesis of penicillins and cephalosporins and may be important in determining the thiol-disulfide redox balance. This chain is Thioredoxin reductase, found in Streptomyces clavuligerus.